The following is a 397-amino-acid chain: Xylose isomerase (397 aa).

Catalysis depends on residues histidine 54 and aspartate 57. Positions 181, 217, 220, 245, 255, 257, and 293 each coordinate Mg(2+).

It belongs to the xylose isomerase family. Homotetramer. Mg(2+) is required as a cofactor.

The protein localises to the cytoplasm. The catalysed reaction is alpha-D-xylose = alpha-D-xylulofuranose. This Clavibacter michiganensis subsp. michiganensis (strain NCPPB 382) protein is Xylose isomerase.